Reading from the N-terminus, the 435-residue chain is Glutamate-1-semialdehyde 2,1-aminomutase (435 aa).

Lys266 is modified (N6-(pyridoxal phosphate)lysine).

Belongs to the class-III pyridoxal-phosphate-dependent aminotransferase family. HemL subfamily. As to quaternary structure, homodimer. The cofactor is pyridoxal 5'-phosphate.

The protein localises to the cytoplasm. It carries out the reaction (S)-4-amino-5-oxopentanoate = 5-aminolevulinate. The protein operates within porphyrin-containing compound metabolism; protoporphyrin-IX biosynthesis; 5-aminolevulinate from L-glutamyl-tRNA(Glu): step 2/2. This chain is Glutamate-1-semialdehyde 2,1-aminomutase, found in Coxiella burnetii (strain CbuG_Q212) (Coxiella burnetii (strain Q212)).